The primary structure comprises 340 residues: UDP-3-O-acylglucosamine N-acyltransferase (340 aa).

His-238 serves as the catalytic Proton acceptor.

It belongs to the transferase hexapeptide repeat family. LpxD subfamily. Homotrimer.

It catalyses the reaction a UDP-3-O-[(3R)-3-hydroxyacyl]-alpha-D-glucosamine + a (3R)-hydroxyacyl-[ACP] = a UDP-2-N,3-O-bis[(3R)-3-hydroxyacyl]-alpha-D-glucosamine + holo-[ACP] + H(+). The protein operates within bacterial outer membrane biogenesis; LPS lipid A biosynthesis. In terms of biological role, catalyzes the N-acylation of UDP-3-O-acylglucosamine using 3-hydroxyacyl-ACP as the acyl donor. Is involved in the biosynthesis of lipid A, a phosphorylated glycolipid that anchors the lipopolysaccharide to the outer membrane of the cell. This chain is UDP-3-O-acylglucosamine N-acyltransferase, found in Shewanella frigidimarina (strain NCIMB 400).